The primary structure comprises 89 residues: UPF0297 protein MGAS9429_Spy1808 (89 aa).

Belongs to the UPF0297 family.

The polypeptide is UPF0297 protein MGAS9429_Spy1808 (Streptococcus pyogenes serotype M12 (strain MGAS9429)).